Reading from the N-terminus, the 329-residue chain is Acetyl-coenzyme A carboxylase carboxyl transferase subunit alpha (329 aa).

The 255-residue stretch at 40–294 (QLESLAARRR…RAAIERHLEQ (255 aa)) folds into the CoA carboxyltransferase C-terminal domain.

The protein belongs to the AccA family. As to quaternary structure, acetyl-CoA carboxylase is a heterohexamer composed of biotin carboxyl carrier protein (AccB), biotin carboxylase (AccC) and two subunits each of ACCase subunit alpha (AccA) and ACCase subunit beta (AccD).

It is found in the cytoplasm. It carries out the reaction N(6)-carboxybiotinyl-L-lysyl-[protein] + acetyl-CoA = N(6)-biotinyl-L-lysyl-[protein] + malonyl-CoA. It participates in lipid metabolism; malonyl-CoA biosynthesis; malonyl-CoA from acetyl-CoA: step 1/1. In terms of biological role, component of the acetyl coenzyme A carboxylase (ACC) complex. First, biotin carboxylase catalyzes the carboxylation of biotin on its carrier protein (BCCP) and then the CO(2) group is transferred by the carboxyltransferase to acetyl-CoA to form malonyl-CoA. This Synechococcus sp. (strain CC9605) protein is Acetyl-coenzyme A carboxylase carboxyl transferase subunit alpha.